Reading from the N-terminus, the 497-residue chain is MAGGITDTGELYSPYVGLVYMFNLIVGTGALTMPKAFATAGWLVSLVLLMFLGFMSYMTTTFVVEAMAAANAQLRWKRMEKRKEDDEDEDSSSGVSDSDVLLRDSYERAETRPILSVQRRGSPNIFEITERVEMGQMASMFFNKVGVNLFYFCIIIYLYGDLAIYAAAVPVSLMQVTCAIGNHSCNVGDGTKYNDTDKCWGPIRRIDAYRLYLAAFTLLLGPFTFFNVQKTKYLQIMTSLMRWIAFILMIILALIRISRGQAEGHPSMAQLSGIRNLFGVCVYSFMCQHSLPSLITPISKKRHVNKLVLLDYILILAFYSLLSFTAIYCFRNDTLMDMYTLNFTNCEIINVAFIRYFLGLFPVFTISTNFPIIAVTLRNNWKTLFHREGGTYPWLVDRIVFPAITLVPPVLVVFCTHDLESLVGITGAYAGNGIQYLIPAFLAYCSRKDTQLVFGSGTVNKHLSPFRHTFWIVFVLIWGFSCFVFVTANIVLSESKL.

Over 1–10 (MAGGITDTGE) the chain is Cytoplasmic. Residues 11 to 31 (LYSPYVGLVYMFNLIVGTGAL) traverse the membrane as a helical segment. Topologically, residues 32–35 (TMPK) are extracellular. A helical membrane pass occupies residues 36-56 (AFATAGWLVSLVLLMFLGFMS). Residues 57–148 (YMTTTFVVEA…SMFFNKVGVN (92 aa)) are Cytoplasmic-facing. Residues 149-169 (LFYFCIIIYLYGDLAIYAAAV) form a helical membrane-spanning segment. The Extracellular portion of the chain corresponds to 170-205 (PVSLMQVTCAIGNHSCNVGDGTKYNDTDKCWGPIRR). A glycan (N-linked (GlcNAc...) asparagine) is linked at N194. A helical transmembrane segment spans residues 206-226 (IDAYRLYLAAFTLLLGPFTFF). Residues 227-234 (NVQKTKYL) are Cytoplasmic-facing. Residues 235–255 (QIMTSLMRWIAFILMIILALI) traverse the membrane as a helical segment. At 256-277 (RISRGQAEGHPSMAQLSGIRNL) the chain is on the extracellular side. A helical membrane pass occupies residues 278 to 298 (FGVCVYSFMCQHSLPSLITPI). Topologically, residues 299–306 (SKKRHVNK) are cytoplasmic. A helical membrane pass occupies residues 307–327 (LVLLDYILILAFYSLLSFTAI). Residues 328–356 (YCFRNDTLMDMYTLNFTNCEIINVAFIRY) lie on the Extracellular side of the membrane. A helical transmembrane segment spans residues 357–377 (FLGLFPVFTISTNFPIIAVTL). The Cytoplasmic segment spans residues 378–398 (RNNWKTLFHREGGTYPWLVDR). The chain crosses the membrane as a helical span at residues 399-419 (IVFPAITLVPPVLVVFCTHDL). The Extracellular segment spans residues 420–421 (ES). The helical transmembrane segment at 422-442 (LVGITGAYAGNGIQYLIPAFL) threads the bilayer. Topologically, residues 443–471 (AYCSRKDTQLVFGSGTVNKHLSPFRHTFW) are cytoplasmic. The helical transmembrane segment at 472–492 (IVFVLIWGFSCFVFVTANIVL) threads the bilayer. Over 493–497 (SESKL) the chain is Extracellular.

It belongs to the TMEM104 family.

The protein resides in the membrane. This Gallus gallus (Chicken) protein is Transmembrane protein 104 (TMEM104).